The following is a 55-amino-acid chain: Bowman-Birk type proteinase inhibitor B1 (55 aa).

4 cysteine pairs are disulfide-bonded: Cys-6–Cys-53, Cys-12–Cys-17, Cys-26–Cys-33, and Cys-30–Cys-45.

The protein belongs to the Bowman-Birk serine protease inhibitor family. As to expression, expressed in bulb (at protein level).

Its function is as follows. Serine protease inhibitor. Weakly inhibits trypsin (Ki = 167 nM). Does not inhibit bacterial subtilisin or mamallian chymotrypsin. This chain is Bowman-Birk type proteinase inhibitor B1, found in Hyacinthus orientalis (Common hyacinth).